Here is a 210-residue protein sequence, read N- to C-terminus: Cytochrome c4 (210 aa).

An N-terminal signal peptide occupies residues 1–20 (MNKVLVSLLLTLGITGMAHA). The heme c site is built by Cys-34, Cys-37, His-38, Met-86, Cys-139, Cys-142, His-143, and Met-187.

Binds 2 heme c groups covalently per subunit.

Its subcellular location is the periplasm. In terms of biological role, diheme, high potential cytochrome c believed to be an intermediate electron donor to terminal oxidation systems. The chain is Cytochrome c4 (cc4) from Stutzerimonas stutzeri (Pseudomonas stutzeri).